A 212-amino-acid chain; its full sequence is Methylthioribulose-1-phosphate dehydratase (212 aa).

The Zn(2+) site is built by His97 and His99.

Belongs to the aldolase class II family. MtnB subfamily. In terms of assembly, homotetramer. It depends on Zn(2+) as a cofactor.

It catalyses the reaction 5-(methylsulfanyl)-D-ribulose 1-phosphate = 5-methylsulfanyl-2,3-dioxopentyl phosphate + H2O. It participates in amino-acid biosynthesis; L-methionine biosynthesis via salvage pathway; L-methionine from S-methyl-5-thio-alpha-D-ribose 1-phosphate: step 2/6. Catalyzes the dehydration of methylthioribulose-1-phosphate (MTRu-1-P) into 2,3-diketo-5-methylthiopentyl-1-phosphate (DK-MTP-1-P). In Bacillus cereus (strain AH187), this protein is Methylthioribulose-1-phosphate dehydratase.